The primary structure comprises 425 residues: MQMMKKRILLCLLVGMTCLPVLAQFRVEVSGVGLTQLPIAVSAFRGQDSVPQKIAAIVQADLERSGQFRGVDTVGAALDEGTRPDVALWRQKGADSLVTGSVSRLADGRYDVRFRLWDVVRGQDLGGQSYAVTQADLRLSAHRIADFIYEKLTGDKGAFSTRITYVTKAAQRYQLWVADADGENAQSALASPEPIISPAWSPNGSQIAYVSFESRKPVVYTHDVATGKRRLIANFRGSNSAPAWSPDGRTLAVTLSRDGGSQLYAIDAGGGEPRRLAQNSSIDTEPVYAPDGKNIYFVSDRGGAPQIYRMPVTGGGAERVTFTGTYNISPAISPDGRWLAYISRVSGAFKLHVLELASGAVTAITDTTADESPSFAPNSRLIVYATQSQGREALMTATVDGKVKARLAGQNGDIREPGWGPFQKQ.

An N-terminal signal peptide occupies residues 1-23 (MQMMKKRILLCLLVGMTCLPVLA).

It belongs to the TolB family. As to quaternary structure, the Tol-Pal system is composed of five core proteins: the inner membrane proteins TolA, TolQ and TolR, the periplasmic protein TolB and the outer membrane protein Pal. They form a network linking the inner and outer membranes and the peptidoglycan layer.

The protein resides in the periplasm. In terms of biological role, part of the Tol-Pal system, which plays a role in outer membrane invagination during cell division and is important for maintaining outer membrane integrity. This is Tol-Pal system protein TolB from Albidiferax ferrireducens (strain ATCC BAA-621 / DSM 15236 / T118) (Rhodoferax ferrireducens).